Here is a 471-residue protein sequence, read N- to C-terminus: MLDFMDYIQLAFAEATNWNCDNSYSSLTATAQSLLDFSTPERLRVHLSSLATPHFATSYTLGTVGLIDGSVSYLYSTVPLNNTPSRSALIPLRKLARGYRQVQPPVAPVEDCGWQSCLGGLGSSESKPSGNDDSQPSPGRKATLLNATLHLPPPTILNALFLRRMSPTMQLSLAVCSTRGAPLSNSAPQASLLGQLSHDTGKYSNEYLFSTDNSLFGWRGLWNFGPDPRHPKENSSPQLSLLSAGAEAYYSPVSSLIGMSTGLRFSTLPAATEMPSSSSSASSTTTTSNHDTPISTFPYTLTLVLTPLTGSLSTTYSLRASPNLAFSSRFGFNVYSWESEMVAGCELWRKRRKPSPPPVDDDGLEWARRKMRMADTPAFAPVEPPTTHNRDEENESVLKIRVDQSWNVRLLWEGRVKELLVSAGVGLGPSSFSSPSRAANSTPAGGGQSVGGGISGRSYWHGVGVSISYSS.

Residues proline 429–serine 455 are disordered. The span at alanine 444–serine 455 shows a compositional bias: gly residues.

This sequence belongs to the MDM10 family. In terms of assembly, component of the ER-mitochondria encounter structure (ERMES) or MDM complex, composed of mmm1, mdm10, mdm12 and mdm34. Associates with the mitochondrial outer membrane sorting assembly machinery SAM(core) complex.

The protein resides in the mitochondrion outer membrane. In terms of biological role, component of the ERMES/MDM complex, which serves as a molecular tether to connect the endoplasmic reticulum and mitochondria. Components of this complex are involved in the control of mitochondrial shape and protein biogenesis and may function in phospholipid exchange. mdm10 is involved in the late assembly steps of the general translocase of the mitochondrial outer membrane (TOM complex). Functions in the tom40-specific route of the assembly of outer membrane beta-barrel proteins, including the association of tom40 with the receptor tom22 and small TOM proteins. Can associate with the SAM(core) complex as well as the mdm12-mmm1 complex, both involved in late steps of the major beta-barrel assembly pathway, that is responsible for biogenesis of all outer membrane beta-barrel proteins. May act as a switch that shuttles between both complexes and channels precursor proteins into the tom40-specific pathway. Plays a role in mitochondrial morphology and in the inheritance of mitochondria. In Aspergillus fumigatus (strain ATCC MYA-4609 / CBS 101355 / FGSC A1100 / Af293) (Neosartorya fumigata), this protein is Mitochondrial distribution and morphology protein 10 (mdmB).